The primary structure comprises 464 residues: ATP synthase subunit beta (464 aa).

An ATP-binding site is contributed by 154–161 (GGAGVGKT).

The protein belongs to the ATPase alpha/beta chains family. In terms of assembly, F-type ATPases have 2 components, CF(1) - the catalytic core - and CF(0) - the membrane proton channel. CF(1) has five subunits: alpha(3), beta(3), gamma(1), delta(1), epsilon(1). CF(0) has three main subunits: a(1), b(2) and c(9-12). The alpha and beta chains form an alternating ring which encloses part of the gamma chain. CF(1) is attached to CF(0) by a central stalk formed by the gamma and epsilon chains, while a peripheral stalk is formed by the delta and b chains.

It is found in the cell membrane. The catalysed reaction is ATP + H2O + 4 H(+)(in) = ADP + phosphate + 5 H(+)(out). In terms of biological role, produces ATP from ADP in the presence of a proton gradient across the membrane. The catalytic sites are hosted primarily by the beta subunits. The sequence is that of ATP synthase subunit beta from Mycoplasmopsis synoviae (strain 53) (Mycoplasma synoviae).